Reading from the N-terminus, the 623-residue chain is Riboflavin biosynthesis protein PYRR, chloroplastic (623 aa).

The N-terminal 45 residues, 1-45 (MPLPQPLLGGASPAPARAASSFLHPLLHTRHRVSTAPAAASSFVP), are a transit peptide targeting the chloroplast. Residues 52–181 (ANDAMLLRRA…ALRNEGIQVD (130 aa)) form the CMP/dCMP-type deaminase domain.

The protein in the C-terminal section; belongs to the YbiA family.

It localises to the plastid. The protein localises to the chloroplast. It catalyses the reaction 5-amino-6-(5-phospho-D-ribitylamino)uracil + NADP(+) = 5-amino-6-(5-phospho-D-ribosylamino)uracil + NADPH + H(+). The enzyme catalyses 2,5-diamino-6-hydroxy-4-(5-phosphoribosylamino)-pyrimidine + H2O = 2,5,6-triamino-4-hydroxypyrimidine + D-ribose 5-phosphate. It carries out the reaction 5-amino-6-(5-phospho-D-ribosylamino)uracil + H2O = 5,6-diaminouracil + D-ribose 5-phosphate. It participates in cofactor biosynthesis; riboflavin biosynthesis; 5-amino-6-(D-ribitylamino)uracil from GTP: step 3/4. Functionally, pyrimidine reductase involved in the riboflavin biosynthesis pathway. Also has a non-functional N-terminal deaminase domain that lacks the catalytically essential zinc-binding residues. 39% activity when NADH replaces NADPH. No evidence for a phosphatase activity conferred by the N-terminal domain. Its function is as follows. Catalyzes the hydrolysis of the N-glycosidic bond in the first two intermediates of riboflavin biosynthesis, which are highly reactive metabolites, yielding relatively innocuous products. Thus, can divert a surplus of harmful intermediates into relatively harmless products and pre-empt the damage these intermediates would otherwise do. Has no activity against GTP, nucleoside monophosphates or ADP-ribose. The protein is Riboflavin biosynthesis protein PYRR, chloroplastic (PYRR) of Zea mays (Maize).